The following is a 301-amino-acid chain: Protease HtpX homolog (301 aa).

Helical transmembrane passes span 11–31 and 34–54; these read VLLL…IAGA and NSAF…YSYW. Residue histidine 138 participates in Zn(2+) binding. Glutamate 139 is a catalytic residue. Histidine 142 lines the Zn(2+) pocket. The next 2 membrane-spanning stretches (helical) occupy residues 154–174 and 188–208; these read AAAV…AAIF and LVGL…QLAI. Glutamate 213 contributes to the Zn(2+) binding site.

It belongs to the peptidase M48B family. It depends on Zn(2+) as a cofactor.

The protein localises to the cell membrane. This chain is Protease HtpX homolog, found in Kocuria rhizophila (strain ATCC 9341 / DSM 348 / NBRC 103217 / DC2201).